Here is a 425-residue protein sequence, read N- to C-terminus: Serine--tRNA ligase (425 aa).

228 to 230 serves as a coordination point for L-serine; that stretch reads TAE. 259–261 is a binding site for ATP; that stretch reads RSE. Glutamate 282 contacts L-serine. 346–349 provides a ligand contact to ATP; sequence EIAS. Serine 382 lines the L-serine pocket.

The protein belongs to the class-II aminoacyl-tRNA synthetase family. Type-1 seryl-tRNA synthetase subfamily. As to quaternary structure, homodimer. The tRNA molecule binds across the dimer.

It localises to the cytoplasm. The enzyme catalyses tRNA(Ser) + L-serine + ATP = L-seryl-tRNA(Ser) + AMP + diphosphate + H(+). It catalyses the reaction tRNA(Sec) + L-serine + ATP = L-seryl-tRNA(Sec) + AMP + diphosphate + H(+). It participates in aminoacyl-tRNA biosynthesis; selenocysteinyl-tRNA(Sec) biosynthesis; L-seryl-tRNA(Sec) from L-serine and tRNA(Sec): step 1/1. In terms of biological role, catalyzes the attachment of serine to tRNA(Ser). Is also able to aminoacylate tRNA(Sec) with serine, to form the misacylated tRNA L-seryl-tRNA(Sec), which will be further converted into selenocysteinyl-tRNA(Sec). In Rickettsia peacockii (strain Rustic), this protein is Serine--tRNA ligase.